The primary structure comprises 23 residues: Caerin-4.2 (23 aa).

Expressed by the skin parotoid and/or rostral glands.

It is found in the secreted. In terms of biological role, antibacterial peptide, that adopts an alpha helical conformation which can disrupt bacterial membranes. Each caerin displays a different antimicrobial specificity. The sequence is that of Caerin-4.2 from Ranoidea caerulea (Green tree frog).